Consider the following 117-residue polypeptide: Large ribosomal subunit protein bL20c (117 aa).

Belongs to the bacterial ribosomal protein bL20 family.

It localises to the plastid. The protein resides in the chloroplast. Its function is as follows. Binds directly to 23S ribosomal RNA and is necessary for the in vitro assembly process of the 50S ribosomal subunit. It is not involved in the protein synthesizing functions of that subunit. The polypeptide is Large ribosomal subunit protein bL20c (Platanus occidentalis (Sycamore)).